The chain runs to 161 residues: C-type natriuretic peptide (161 aa).

The N-terminal stretch at 1-22 (MFASRLAALGLLLLALVLDGKP) is a signal peptide. The interval 19–135 (DGKPAPPPQP…GGGGSRRLKG (117 aa)) is disordered. The propeptide occupies 23 to 139 (APPPQPLRKA…SRRLKGLPKK (117 aa)). 2 stretches are compositionally biased toward low complexity: residues 29 to 60 (LRKA…SSGP) and 76 to 93 (AAPT…AASR). Positions 94 to 104 (LLRDLRPDGKQ) are enriched in basic and acidic residues. Residues 120-130 (GGGGGGGGGGS) are compositionally biased toward gly residues. Residues C145 and C161 are joined by a disulfide bond.

It belongs to the natriuretic peptide family. In terms of tissue distribution, expressed by the venom gland.

The protein localises to the secreted. In terms of biological role, snake venom natriuretic peptide that has a vasorelaxant activity in rat aortic strips and a diuretic potency in anesthetized rats. May act by activating natriuretic receptors (NPR1 and/or NPR2). The protein is C-type natriuretic peptide of Rhabdophis tigrinus tigrinus (Tiger keelback snake).